The chain runs to 111 residues: MSGTFEIYNDKAGEFRFRLKANNGQAILASEGYKDKSGCLNGVESVKKNAPDDARYERKASGADKFMFNLKAGNHQVVGTSQSYASEASRDKGIESVKNHAPDAKVVEVGN.

2 tandem repeats follow at residues 10–58 (DKAG…RYER) and 61–109 (SGAD…VVEV).

This sequence belongs to the UPF0339 family. Duplicated subfamily.

This chain is UPF0339 protein in ptx operon 5'region, found in Stutzerimonas stutzeri (Pseudomonas stutzeri).